The following is a 121-amino-acid chain: MEEVIQAGLAQWSRQKGLALPWDRTRGHPDVPWRNLTSSPTRPLAQPAGSCMPAEPSPAAHYHQLHVHLQLLPSDLSERPGLRLAPLALVEVGMTLPVPQTPLPHVTQQQKLAPGRQLCPW.

Residues 21–57 form a disordered region; the sequence is PWDRTRGHPDVPWRNLTSSPTRPLAQPAGSCMPAEPS.

As to quaternary structure, interacts with core protein of hepatitis B virus.

The sequence is that of Putative viral protein-binding protein C1 from Homo sapiens (Human).